The chain runs to 473 residues: BTB/POZ domain-containing protein KCTD8 (473 aa).

Positions 1–36 (MALKDTGSGGSTILPISEMVSSSSSPGASAAAAPGP) are disordered. Residues 21–35 (SSSSSPGASAAAAPG) show a composition bias toward low complexity. The 79-residue stretch at 44-122 (EVVELNVGGQ…LRDKQLALPE (79 aa)) folds into the BTB domain. Serine 78 carries the post-translational modification Phosphoserine. Arginine 80 bears the Omega-N-methylarginine mark. A disordered region spans residues 326–409 (IVSPKQEHED…WIPPPDKRRN (84 aa)). Basic and acidic residues predominate over residues 330–346 (KQEHEDRKHDKVTDKGS). A compositionally biased stretch (polar residues) spans 347-388 (ESGTSCNELSTSSCDSHSEASTPQDNPSSAQQATAHQPNTLT). Serine 410 is subject to Phosphoserine.

In terms of assembly, interacts as a tetramer with GABRB1 and GABRB2.

Its subcellular location is the presynaptic cell membrane. It is found in the postsynaptic cell membrane. In terms of biological role, auxiliary subunit of GABA-B receptors that determine the pharmacology and kinetics of the receptor response. Increases agonist potency and markedly alter the G-protein signaling of the receptors by accelerating onset and promoting desensitization. This is BTB/POZ domain-containing protein KCTD8 (KCTD8) from Homo sapiens (Human).